Reading from the N-terminus, the 293-residue chain is MATH domain and coiled-coil domain-containing protein At3g58400 (293 aa).

Residues 3 to 126 (RSRSQNLITE…NGELKIVAEI (124 aa)) enclose the MATH domain. A coiled-coil region spans residues 227–285 (KLDWLENKLYEVAQKKEDDEAGETRLREMEEKLKDLKLKCSKMEALVEEEKAKVSAAKA).

In Arabidopsis thaliana (Mouse-ear cress), this protein is MATH domain and coiled-coil domain-containing protein At3g58400.